The sequence spans 567 residues: Dihydroxy-acid dehydratase 1 (567 aa).

C57 contacts [2Fe-2S] cluster. D89 contacts Mg(2+). Residue C130 participates in [2Fe-2S] cluster binding. Mg(2+)-binding residues include D131 and K132. Residue K132 is modified to N6-carboxylysine. C202 provides a ligand contact to [2Fe-2S] cluster. E454 lines the Mg(2+) pocket. S480 serves as the catalytic Proton acceptor.

The protein belongs to the IlvD/Edd family. Homodimer. Requires [2Fe-2S] cluster as cofactor. It depends on Mg(2+) as a cofactor.

The catalysed reaction is (2R)-2,3-dihydroxy-3-methylbutanoate = 3-methyl-2-oxobutanoate + H2O. It carries out the reaction (2R,3R)-2,3-dihydroxy-3-methylpentanoate = (S)-3-methyl-2-oxopentanoate + H2O. The protein operates within amino-acid biosynthesis; L-isoleucine biosynthesis; L-isoleucine from 2-oxobutanoate: step 3/4. It participates in amino-acid biosynthesis; L-valine biosynthesis; L-valine from pyruvate: step 3/4. Functions in the biosynthesis of branched-chain amino acids. Catalyzes the dehydration of (2R,3R)-2,3-dihydroxy-3-methylpentanoate (2,3-dihydroxy-3-methylvalerate) into 2-oxo-3-methylpentanoate (2-oxo-3-methylvalerate) and of (2R)-2,3-dihydroxy-3-methylbutanoate (2,3-dihydroxyisovalerate) into 2-oxo-3-methylbutanoate (2-oxoisovalerate), the penultimate precursor to L-isoleucine and L-valine, respectively. In Aromatoleum aromaticum (strain DSM 19018 / LMG 30748 / EbN1) (Azoarcus sp. (strain EbN1)), this protein is Dihydroxy-acid dehydratase 1.